Reading from the N-terminus, the 457-residue chain is Solute carrier family 38 member 6 (457 aa).

An N-acetylmethionine modification is found at Met-1. Ser-4 and Ser-7 each carry phosphoserine. 5 consecutive transmembrane segments (helical) span residues 48–68 (FGLS…LGLA), 70–90 (VMAN…ALLA), 112–132 (LGLF…IIIQ), 171–191 (LLII…KIGF), and 192–212 (LGYT…VVVI). Cys-219 and Cys-239 are oxidised to a cystine. N-linked (GlcNAc...) asparagine glycosylation occurs at Asn-234. Residues 251 to 271 (VYAIPTMAFSFLCHTSVLPIY) form a helical membrane-spanning segment. Asn-284 carries an N-linked (GlcNAc...) asparagine glycan. Transmembrane regions (helical) follow at residues 289–309 (AIAL…LTFY), 328–348 (AAVM…VPLI), 372–392 (SLTT…VPDI), 395–415 (VFGV…PGLF), and 432–452 (ALSL…LIIL).

It belongs to the amino acid/polyamine transporter 2 family.

It is found in the cell membrane. It localises to the synapse. It carries out the reaction L-glutamine(out) = L-glutamine(in). The catalysed reaction is L-glutamate(out) = L-glutamate(in). Functionally, amino acid transporter with an apparent selectivity for L-glutamine and L-glutamate. May facilitate glutamine uptake in excitatory neurons. The transport mechanism remains to be elucidated. The sequence is that of Solute carrier family 38 member 6 from Rattus norvegicus (Rat).